Here is an 890-residue protein sequence, read N- to C-terminus: Leucine-rich repeat receptor-like tyrosine-protein kinase PXC3 (890 aa).

Residues 1-23 form the signal peptide; sequence MTFWCMSILLIVGFLSKSELCEA. At 24–534 the chain is on the extracellular side; it reads QLSDEATLVA…LRYNHRVSYR (511 aa). Residues asparagine 46, asparagine 61, asparagine 78, and asparagine 108 are each glycosylated (N-linked (GlcNAc...) asparagine). 18 LRR repeats span residues 67-85, 86-108, 110-132, 133-157, 159-181, 182-205, 206-229, 231-254, 256-276, 278-300, 301-325, 326-349, 350-373, 375-397, 399-421, 422-446, 447-469, and 471-492; these read MLDL…ISDL, RSLK…SFGN, SELE…EFGK, LRGL…LKVL, RLEE…VGNL, SSLR…LGLV, SELE…IFEK, KLKV…GICS, LSSI…TIGN, SGLT…EFSK, CSNL…LGQL, INLQ…FLGS, GNLN…LCSM, RLQY…IGNC, KLLQ…IGRM, RNLQ…LGKL, DKLV…LLKG, and MSLI…VFVP. N-linked (GlcNAc...) asparagine glycans are attached at residues asparagine 140, asparagine 171, and asparagine 180. 3 N-linked (GlcNAc...) asparagine glycosylation sites follow: asparagine 276, asparagine 289, and asparagine 303. A glycan (N-linked (GlcNAc...) asparagine) is linked at asparagine 363. Asparagine 429 carries N-linked (GlcNAc...) asparagine glycosylation. Residues asparagine 477 and asparagine 498 are each glycosylated (N-linked (GlcNAc...) asparagine). A helical transmembrane segment spans residues 535–555; it reads IVLAVIGSGVAVFVSVTVVVL. Topologically, residues 556–890 are cytoplasmic; it reads LFMMREKQEK…EMLQEVKQIK (335 aa). Residues 608 to 886 enclose the Protein kinase domain; it reads MKESNKLSTG…KKVVEMLQEV (279 aa). ATP-binding positions include 614–622 and lysine 636; that span reads LSTGTFSSV. Aspartate 735 acts as the Proton acceptor in catalysis.

The protein belongs to the protein kinase superfamily. Tyr protein kinase family. As to expression, expressed in the vascular strands of cotyledons, the shoot apex, hypocotyls, roots, leaves, stems and flowers.

It is found in the cell membrane. The enzyme catalyses L-tyrosyl-[protein] + ATP = O-phospho-L-tyrosyl-[protein] + ADP + H(+). In terms of biological role, leucine-rich repeat receptor-like protein kinase that may play a role in vascular tissues development. This Arabidopsis thaliana (Mouse-ear cress) protein is Leucine-rich repeat receptor-like tyrosine-protein kinase PXC3.